The following is a 391-amino-acid chain: NADH-quinone oxidoreductase subunit D (391 aa).

This sequence belongs to the complex I 49 kDa subunit family. As to quaternary structure, NDH-1 is composed of 14 different subunits. Subunits NuoB, C, D, E, F, and G constitute the peripheral sector of the complex.

It is found in the cell inner membrane. It carries out the reaction a quinone + NADH + 5 H(+)(in) = a quinol + NAD(+) + 4 H(+)(out). NDH-1 shuttles electrons from NADH, via FMN and iron-sulfur (Fe-S) centers, to quinones in the respiratory chain. The immediate electron acceptor for the enzyme in this species is believed to be ubiquinone. Couples the redox reaction to proton translocation (for every two electrons transferred, four hydrogen ions are translocated across the cytoplasmic membrane), and thus conserves the redox energy in a proton gradient. The chain is NADH-quinone oxidoreductase subunit D from Rickettsia felis (strain ATCC VR-1525 / URRWXCal2) (Rickettsia azadi).